The primary structure comprises 70 residues: DNA gyrase inhibitor YacG (70 aa).

Residues cysteine 7, cysteine 10, cysteine 26, and cysteine 30 each coordinate Zn(2+).

The protein belongs to the DNA gyrase inhibitor YacG family. In terms of assembly, interacts with GyrB. Zn(2+) is required as a cofactor.

Functionally, inhibits all the catalytic activities of DNA gyrase by preventing its interaction with DNA. Acts by binding directly to the C-terminal domain of GyrB, which probably disrupts DNA binding by the gyrase. In Shewanella woodyi (strain ATCC 51908 / MS32), this protein is DNA gyrase inhibitor YacG.